The primary structure comprises 370 residues: Peridinin-chlorophyll a-binding protein 1, chloroplastic (370 aa).

A chloroplast-targeting transit peptide spans 1–57 (MVRSGKKAVVLAAVAFCATSVVQKSHGFVPSPLRQRAAAAGAAAASAATMFAPAAFA). Repeat copies occupy residues 58 to 220 (DEIG…VPSG) and 221 to 370 (DKIG…AAQR).

As to quaternary structure, homotrimer.

It is found in the plastid. It localises to the chloroplast. Its function is as follows. Water-soluble antenna for capture of solar energy in the blue-green range. Peridinin is an asymmetric carotenoid. This chain is Peridinin-chlorophyll a-binding protein 1, chloroplastic, found in Amphidinium carterae (Dinoflagellate).